The primary structure comprises 476 residues: Probable cytosolic Fe-S cluster assembly factor GF22738 (476 aa).

The [4Fe-4S] cluster site is built by cysteine 23, cysteine 68, cysteine 71, cysteine 74, cysteine 187, cysteine 243, cysteine 395, and cysteine 399.

Belongs to the NARF family.

Component of the cytosolic iron-sulfur (Fe/S) protein assembly machinery. Required for maturation of extramitochondrial Fe/S proteins. In Drosophila ananassae (Fruit fly), this protein is Probable cytosolic Fe-S cluster assembly factor GF22738.